Consider the following 73-residue polypeptide: uncharacterized protein (73 aa).

This sequence belongs to the asfivirus DP63R family.

This is an uncharacterized protein from Ornithodoros (relapsing fever ticks).